A 984-amino-acid chain; its full sequence is Mineralocorticoid receptor (984 aa).

The segment at 1–602 is modulating; it reads METKGYHSLP…STGSSRPSKI (602 aa). Positions 231–243 are enriched in polar residues; that stretch reads QGTPLTCSPNVEN. Disordered stretches follow at residues 231 to 329 and 347 to 373; these read QGTP…AAST and GTSA…QEVP. A phosphoserine mark is found at S250, S259, S283, S287, and S299. The segment covering 259–291 has biased composition (low complexity); it reads SPLSSPLSSMKSSISSPPSHCSVKSPVSSPNNV. Residues 292–329 are compositionally biased toward polar residues; the sequence is TLRSSVSSPANINNSRCSVSSPSNTNNRSTLSSPAAST. The Zn(2+) site is built by C603, C606, C620, C623, C639, C645, C655, and C658. NR C4-type zinc fingers lie at residues 603 to 623 and 639 to 663; these read CLVC…CGSC and CAGR…LQKC. A DNA-binding region (nuclear receptor) is located at residues 603–668; sequence CLVCGDEASG…RLQKCLQAGM (66 aa). Residues 669-725 are hinge; it reads NLGARKSKKLGKLKGIHEEQPQQQQPPPPPPPPQSPEEGTTYIAPAKEPSVNTALVP. Positions 684 to 710 are disordered; the sequence is IHEEQPQQQQPPPPPPPPQSPEEGTTY. A compositionally biased stretch (pro residues) spans 692-703; sequence QQPPPPPPPPQS. The NR LBD domain occupies 726–964; sequence QLSTISRALT…EFPAMLVEII (239 aa). Residues N770 and Q776 each coordinate 21-hydroxyprogesterone. Aldosterone contacts are provided by N770 and Q776. Residues N770 and Q776 each coordinate progesterone. Positions 782-785 are important for coactivator binding; it reads KWAK. 2 residues coordinate 21-hydroxyprogesterone: R817 and T945. Aldosterone is bound by residues R817 and T945. Residues R817 and T945 each contribute to the progesterone site.

Belongs to the nuclear hormone receptor family. NR3 subfamily. Heteromultimeric cytoplasmic complex with HSP90, HSP70, and FKBP4, in the absence of ligand. After ligand binding, it translocates to the nucleus and binds to DNA as a homodimer and as a heterodimer with NR3C1. May interact with HSD11B2 in the absence of ligand. Binds the coactivators NCOA1, NCOA2, TIF1 and NRIP1. In terms of processing, phosphorylated. Ubiquitous. Highly expressed in distal tubules, convoluted tubules and cortical collecting duct in kidney, and in sweat glands. Detected at lower levels in cardiomyocytes, in epidermis and in colon enterocytes.

It localises to the cytoplasm. The protein resides in the nucleus. The protein localises to the endoplasmic reticulum membrane. Its function is as follows. Receptor for both mineralocorticoids (MC) such as aldosterone and glucocorticoids (GC) such as corticosterone or cortisol. Binds to mineralocorticoid response elements (MRE) and transactivates target genes. The effect of MC is to increase ion and water transport and thus raise extracellular fluid volume and blood pressure and lower potassium levels. The polypeptide is Mineralocorticoid receptor (NR3C2) (Homo sapiens (Human)).